A 226-amino-acid polypeptide reads, in one-letter code: Cytidylate kinase (226 aa).

G10–T18 lines the ATP pocket.

Belongs to the cytidylate kinase family. Type 1 subfamily.

The protein resides in the cytoplasm. The catalysed reaction is CMP + ATP = CDP + ADP. It carries out the reaction dCMP + ATP = dCDP + ADP. This is Cytidylate kinase from Streptococcus thermophilus (strain CNRZ 1066).